Consider the following 446-residue polypeptide: Methylenetetrahydrofolate--tRNA-(uracil-5-)-methyltransferase TrmFO (446 aa).

Position 8 to 13 (8 to 13) interacts with FAD; it reads GAGLAG.

This sequence belongs to the MnmG family. TrmFO subfamily. Requires FAD as cofactor.

It is found in the cytoplasm. The enzyme catalyses uridine(54) in tRNA + (6R)-5,10-methylene-5,6,7,8-tetrahydrofolate + NADH + H(+) = 5-methyluridine(54) in tRNA + (6S)-5,6,7,8-tetrahydrofolate + NAD(+). The catalysed reaction is uridine(54) in tRNA + (6R)-5,10-methylene-5,6,7,8-tetrahydrofolate + NADPH + H(+) = 5-methyluridine(54) in tRNA + (6S)-5,6,7,8-tetrahydrofolate + NADP(+). In terms of biological role, catalyzes the folate-dependent formation of 5-methyl-uridine at position 54 (M-5-U54) in all tRNAs. The chain is Methylenetetrahydrofolate--tRNA-(uracil-5-)-methyltransferase TrmFO from Paracoccus denitrificans (strain Pd 1222).